Here is an 884-residue protein sequence, read N- to C-terminus: MAVRSRRPWVSVALGLVLGFTAASWLIAPRVAELSEKRRRGSSLCSYYGRSATGPRADAQQLLPQPQSRPRLEQSPPPASHELPGPQQPEAAPGGPSFRSSPWQQPALLPQRRRGHTPEGATALPGAPAAKGEPEEEDGGAADPRKGGRPGSSHNGSGDGGAAVPTSGPGDFLYVGVMTAQKYLGSRALAAQRTWARFIPGRVEFFSSQQSPSAALGQPPPPLPVIALPGVDDSYPPQKKSFMMIKYMHDHYLDKYEWFMRADDDVYIKGDKLEEFLRSLNSSKPLYLGQTGLGNTEELGKLGLEPGENFCMGGPGMIFSREVLRRMVPHIGECLREMYTTHEDVEVGRCVRRFGGTQCVWSYEMQQLFHENYEHNRKGYIQDLHNSKIHAAITLHPNKRPAYQYRLHNYMLSRKISELRYRTIQLHRESALMSKLSNSEVSKEDQQLGRTPSFNHFQPRERNEVMEWEFLTGKLLYSAAENQPPRQSINSILRSALDDTVLQVMEMINENAKSRGRLIDFKEIQYGYRRVDPMHGVEYILDLLLLYKRHKGRKLTVPVRRHAYLQQPFSKPFFREVEELDVNRLVESINSGTQSFSVISNSLKILSSLQEAKDIGGHNEKKVHILVPLVGRYDIFLRFMENFESTCLIPKQNVKLVIILFSRDAGQESIKHIELIQEYQSRYPSAEMMLIPMKGEFSRGLGLEMASSQFDNDTLLLFCDVDLIFRGDFLQRCRDNTVQGQQVYYPIIFSQYDPKVTHMRNPPTEGDFVFSKETGFWRDYGYGITCIYKSDLLGAGGFDTSIQGWGLEDVDLYNKVILSGLRPFRSQEVGVVHIFHPVHCDPNLDPKQYKMCLGSKASTFASTMQLAELWLEKHLGVRDNRTLS.

The Cytoplasmic segment spans residues 1–7 (MAVRSRR). The chain crosses the membrane as a helical; Signal-anchor for type II membrane protein span at residues 8 to 28 (PWVSVALGLVLGFTAASWLIA). Residues 29-884 (PRVAELSEKR…LGVRDNRTLS (856 aa)) are Lumenal-facing. The segment at 47–164 (YYGRSATGPR…NGSGDGGAAV (118 aa)) is disordered. 2 stretches are compositionally biased toward low complexity: residues 60-69 (QQLLPQPQSR) and 84-96 (PGPQ…PGGP). N-linked (GlcNAc...) asparagine glycans are attached at residues Asn155 and Asn281. The disordered stretch occupies residues 437-456 (SNSEVSKEDQQLGRTPSFNH). Asn712 carries N-linked (GlcNAc...) asparagine glycosylation. A divalent metal cation contacts are provided by Asp722 and His836. Residue Asn880 is glycosylated (N-linked (GlcNAc...) asparagine).

It belongs to the chondroitin N-acetylgalactosaminyltransferase family. It depends on Co(2+) as a cofactor. Mn(2+) serves as cofactor. The cofactor is Cd(2+).

The protein localises to the golgi apparatus. The protein resides in the golgi stack membrane. The enzyme catalyses 3-O-(beta-D-GlcA-(1-&gt;3)-beta-D-GalNAc-(1-&gt;4)-beta-D-GlcA-(1-&gt;3)-beta-D-Gal-(1-&gt;3)-beta-D-Gal-(1-&gt;4)-beta-D-Xyl)-L-seryl-[protein] + UDP-N-acetyl-alpha-D-galactosamine = 3-O-(beta-D-GalNAc-(1-&gt;4)-beta-D-GlcA-(1-&gt;3)-beta-D-GalNAc-(1-&gt;4)-beta-D-GlcA-(1-&gt;3)-beta-D-Gal-(1-&gt;3)-beta-D-Gal-(1-&gt;4)-beta-D-Xyl)-L-seryl-[protein] + UDP + H(+). It carries out the reaction 3-O-{beta-D-GlcA-(1-&gt;3)-[beta-D-GalNAc-(1-&gt;4)-beta-D-GlcA-(1-&gt;3)](n)-beta-D-GalNAc-(1-&gt;4)-beta-D-GlcA-(1-&gt;3)-beta-D-Gal-(1-&gt;3)-beta-D-Gal-(1-&gt;4)-beta-D-Xyl}-L-seryl-[protein] + UDP-N-acetyl-alpha-D-galactosamine = 3-O-{[beta-D-GalNAc-(1-&gt;4)-beta-D-GlcA-(1-&gt;3)](n+1)-beta-D-GalNAc-(1-&gt;4)-beta-D-GlcA-(1-&gt;3)-beta-D-Gal-(1-&gt;3)-beta-D-Gal-(1-&gt;4)-beta-D-Xyl}-L-seryl-[protein] + UDP + H(+). It catalyses the reaction 3-O-(beta-D-GalNAc-(1-&gt;4)-beta-D-GlcA-(1-&gt;3)-beta-D-Gal-(1-&gt;3)-beta-D-Gal-(1-&gt;4)-beta-D-Xyl)-L-seryl-[protein] + UDP-alpha-D-glucuronate = 3-O-(beta-D-GlcA-(1-&gt;3)-beta-D-GalNAc-(1-&gt;4)-beta-D-GlcA-(1-&gt;3)-beta-D-Gal-(1-&gt;3)-beta-D-Gal-(1-&gt;4)-beta-D-Xyl)-L-seryl-[protein] + UDP + H(+). The catalysed reaction is 3-O-{[beta-D-GalNAc-(1-&gt;4)-beta-D-GlcA-(1-&gt;3)](n)-beta-D-GalNAc-(1-&gt;4)-beta-D-GlcA-(1-&gt;3)-beta-D-Gal-(1-&gt;3)-beta-D-Gal-(1-&gt;4)-beta-D-Xyl}-L-seryl-[protein] + UDP-alpha-D-glucuronate = 3-O-{beta-D-GlcA-(1-&gt;3)-[beta-D-GalNAc-(1-&gt;4)-beta-D-GlcA-(1-&gt;3)](n)-beta-D-GalNAc-(1-&gt;4)-beta-D-GlcA-(1-&gt;3)-beta-D-Gal-(1-&gt;3)-beta-D-Gal-(1-&gt;4)-beta-D-Xyl}-L-seryl-[protein] + UDP + H(+). In terms of biological role, has both beta-1,3-glucuronic acid and beta-1,4-N-acetylgalactosamine transferase activity. Transfers glucuronic acid (GlcUA) from UDP-GlcUA and N-acetylgalactosamine (GalNAc) from UDP-GalNAc to the non-reducing end of the elongating chondroitin polymer. Specific activity is much reduced compared to CHSY1. The polypeptide is Chondroitin sulfate synthase 3 (Chsy3) (Mus musculus (Mouse)).